The chain runs to 325 residues: NADH-quinone oxidoreductase subunit H (325 aa).

8 consecutive transmembrane segments (helical) span residues 11 to 31 (ILLT…CGAF), 81 to 101 (VIFT…FAIV), 114 to 134 (IGIL…LFAG), 154 to 174 (LSYE…AGSF), 186 to 206 (VWNV…GVAV), 237 to 257 (FFVG…TLFF), 265 to 285 (LPPF…FILI), and 304 to 324 (ICLP…LWQA).

The protein belongs to the complex I subunit 1 family. In terms of assembly, NDH-1 is composed of 13 different subunits. Subunits NuoA, H, J, K, L, M, N constitute the membrane sector of the complex.

It is found in the cell inner membrane. It carries out the reaction a quinone + NADH + 5 H(+)(in) = a quinol + NAD(+) + 4 H(+)(out). NDH-1 shuttles electrons from NADH, via FMN and iron-sulfur (Fe-S) centers, to quinones in the respiratory chain. The immediate electron acceptor for the enzyme in this species is believed to be ubiquinone. Couples the redox reaction to proton translocation (for every two electrons transferred, four hydrogen ions are translocated across the cytoplasmic membrane), and thus conserves the redox energy in a proton gradient. This subunit may bind ubiquinone. The sequence is that of NADH-quinone oxidoreductase subunit H from Shigella flexneri serotype 5b (strain 8401).